A 460-amino-acid chain; its full sequence is Zinc transporter 6 (460 aa).

The Cytoplasmic portion of the chain corresponds to 1 to 33 (MGTIHLFRKPQRSFFGKLLQEFRLVAADRRSWK). Residues 34 to 54 (ILLFGAINVLCTGFLLMWCSS) form a helical membrane-spanning segment. Residues 55-64 (TNSIALTAYT) are Extracellular-facing. The helical transmembrane segment at 65–85 (YLTIFDLFSLITCLISYWVMM) threads the bilayer. Over 86 to 98 (RKPSPVYSFGFER) the chain is Cytoplasmic. The helical transmembrane segment at 99–119 (LEVLAVFASTVLAQLGALFIL) threads the bilayer. The Extracellular portion of the chain corresponds to 120–134 (KESAERFLEQPEIHT). Residues 135–155 (GRLLVGTFVALSFNLFTMLSI) form a helical membrane-spanning segment. Topologically, residues 156–200 (RNKPFAYVSEAASTSWLQEHVADLSRSLCGLIPGLSSIFLPRMNP) are cytoplasmic. Residues 201–221 (FVLIDLAGAFALCITYMLIEI) traverse the membrane as a helical segment. Over 222–223 (NN) the chain is Extracellular. The chain crosses the membrane as a helical span at residues 224-244 (YFAVDTASAIAIALMTFGTMY). At 245–460 (PMSVYSGKVL…GINRMGQPRP (216 aa)) the chain is on the cytoplasmic side. The interval 371 to 390 (TPVTSTPAKPSSPPPEFSFN) is disordered.

The protein belongs to the cation diffusion facilitator (CDF) transporter (TC 2.A.4) family. SLC30A subfamily. As to quaternary structure, heterodimer with SLC30A5; form a functional zinc ion transmembrane transporter. In terms of tissue distribution, expressed in brain and liver, and to a lower extent also in lung. Highly expressed in brain (at protein level).

The protein resides in the golgi apparatus. The protein localises to the trans-Golgi network membrane. Functionally, has probably no intrinsic transporter activity but together with SLC30A5 forms a functional zinc ion:proton antiporter heterodimer, mediating zinc entry into the lumen of organelles along the secretory pathway. As part of that zinc ion:proton antiporter, contributes to zinc ion homeostasis within the early secretory pathway and regulates the activation and folding of enzymes like alkaline phosphatases and enzymes involved in phosphatidylinositol glycan anchor biosynthesis. The polypeptide is Zinc transporter 6 (Slc30a6) (Mus musculus (Mouse)).